A 178-amino-acid polypeptide reads, in one-letter code: Alkyl hydroperoxide reductase AhpD (178 aa).

Cysteine 130 serves as the catalytic Proton donor. Cysteine 130 and cysteine 133 are oxidised to a cystine. Catalysis depends on cysteine 133, which acts as the Cysteine sulfenic acid (-SOH) intermediate.

The protein belongs to the AhpD family. As to quaternary structure, homotrimer.

It carries out the reaction N(6)-[(R)-dihydrolipoyl]-L-lysyl-[lipoyl-carrier protein] + a hydroperoxide = N(6)-[(R)-lipoyl]-L-lysyl-[lipoyl-carrier protein] + an alcohol + H2O. Its function is as follows. Antioxidant protein with alkyl hydroperoxidase activity. Required for the reduction of the AhpC active site cysteine residues and for the regeneration of the AhpC enzyme activity. This is Alkyl hydroperoxide reductase AhpD from Mycobacterium ulcerans (strain Agy99).